A 284-amino-acid polypeptide reads, in one-letter code: NAD kinase (284 aa).

Residue Asp-67 is the Proton acceptor of the active site. Residues 67–68 (DG), 141–142 (ND), Arg-152, Lys-169, Asp-171, 182–187 (TGYSLS), and Gln-241 contribute to the NAD(+) site.

The protein belongs to the NAD kinase family. It depends on a divalent metal cation as a cofactor.

Its subcellular location is the cytoplasm. It catalyses the reaction NAD(+) + ATP = ADP + NADP(+) + H(+). Its function is as follows. Involved in the regulation of the intracellular balance of NAD and NADP, and is a key enzyme in the biosynthesis of NADP. Catalyzes specifically the phosphorylation on 2'-hydroxyl of the adenosine moiety of NAD to yield NADP. This chain is NAD kinase, found in Geotalea daltonii (strain DSM 22248 / JCM 15807 / FRC-32) (Geobacter daltonii).